Reading from the N-terminus, the 329-residue chain is MAEKSFNLYRYSIPVDSQLILRDRFLKRREGLIVRVSCSRDGWGEIAPLPGFSEETLDQAQEQAIEWLTTWCNASCDAPRVPLDGTYPSVAFGISCAMDEMKGYLQAEGNYHTAPLCYGDPDELYAKLASMEGEKVAKMKVGIYEANRDGLIADMFLEAIPDLQLRLDANRHWSLEKALQFAAKVKLQHRKRIQFLEEPCKTQALSREFAVQTDIAIAWDESVREPNFCLEKEPHLSAVVIKPTLIGSIQRCTELINQAHSLGLKAVISSSIESSLGLSQLARIAQQYTPNVTPGLDTLDLMEYQVLRAWPSSDLPIVDLESEFITKII.

Lysine 140 acts as the Proton donor in catalysis. 3 residues coordinate Mg(2+): aspartate 168, glutamate 197, and aspartate 220. Residue lysine 242 is the Proton acceptor of the active site.

It belongs to the mandelate racemase/muconate lactonizing enzyme family. MenC type 1 subfamily. The cofactor is a divalent metal cation.

The enzyme catalyses (1R,6R)-6-hydroxy-2-succinyl-cyclohexa-2,4-diene-1-carboxylate = 2-succinylbenzoate + H2O. It functions in the pathway quinol/quinone metabolism; 1,4-dihydroxy-2-naphthoate biosynthesis; 1,4-dihydroxy-2-naphthoate from chorismate: step 4/7. The protein operates within quinol/quinone metabolism; menaquinone biosynthesis. Functionally, converts 2-succinyl-6-hydroxy-2,4-cyclohexadiene-1-carboxylate (SHCHC) to 2-succinylbenzoate (OSB). The sequence is that of o-succinylbenzoate synthase from Haemophilus influenzae (strain ATCC 51907 / DSM 11121 / KW20 / Rd).